A 108-amino-acid chain; its full sequence is Large ribosomal subunit protein uL24 (108 aa).

It belongs to the universal ribosomal protein uL24 family. As to quaternary structure, part of the 50S ribosomal subunit.

Its function is as follows. One of two assembly initiator proteins, it binds directly to the 5'-end of the 23S rRNA, where it nucleates assembly of the 50S subunit. One of the proteins that surrounds the polypeptide exit tunnel on the outside of the subunit. This Mycoplasma capricolum subsp. capricolum (strain California kid / ATCC 27343 / NCTC 10154) protein is Large ribosomal subunit protein uL24.